Here is a 965-residue protein sequence, read N- to C-terminus: UvrABC system protein A (965 aa).

32–39 (GLSGSGKS) lines the ATP pocket. The C4-type zinc-finger motif lies at 254 to 281 (CPVCDYSLPELEPRLFSFNAPMGACPAC). ABC transporter domains lie at 311–588 (WDRR…PRSL) and 608–937 (PNAT…HFLA). 641 to 648 (GVSGSGKS) is a binding site for ATP. A C4-type zinc finger spans residues 740-766 (CEACEGDGLIKVEMHFLPDVYVPCDVC).

It belongs to the ABC transporter superfamily. UvrA family. In terms of assembly, forms a heterotetramer with UvrB during the search for lesions.

The protein resides in the cytoplasm. In terms of biological role, the UvrABC repair system catalyzes the recognition and processing of DNA lesions. UvrA is an ATPase and a DNA-binding protein. A damage recognition complex composed of 2 UvrA and 2 UvrB subunits scans DNA for abnormalities. When the presence of a lesion has been verified by UvrB, the UvrA molecules dissociate. This Xylella fastidiosa (strain 9a5c) protein is UvrABC system protein A.